The chain runs to 233 residues: MSKTAKKLAAASEKIDRTKVYPVAAAIDVVKQAAYAKFDETVDVAVRLGVDPRHADQMVRGAVVLPNGLGKDVRVLVFAKGEKEKEALDAGADYVGAEDLVSKIQEGWFEFDTAIATPDMMGVVGKIGKLLGPRGLMPNPKVGTVTFEVSRAVKESKAGKVEFRVEKAGIVHAPVGKVSFDADSLKGNLLALVEALVKAKPSAAKGIYIKKISMSSTMGPGINLDIADVTSQI.

Belongs to the universal ribosomal protein uL1 family. As to quaternary structure, part of the 50S ribosomal subunit.

Its function is as follows. Binds directly to 23S rRNA. The L1 stalk is quite mobile in the ribosome, and is involved in E site tRNA release. Protein L1 is also a translational repressor protein, it controls the translation of the L11 operon by binding to its mRNA. The sequence is that of Large ribosomal subunit protein uL1 from Pelobacter propionicus (strain DSM 2379 / NBRC 103807 / OttBd1).